We begin with the raw amino-acid sequence, 85 residues long: Large ribosomal subunit protein bL27 (85 aa).

Residues 1–23 are disordered; the sequence is MAHKKAGGSSRNGRDSESKRLGV.

It belongs to the bacterial ribosomal protein bL27 family.

The sequence is that of Large ribosomal subunit protein bL27 from Methylococcus capsulatus (strain ATCC 33009 / NCIMB 11132 / Bath).